The chain runs to 393 residues: 1-deoxy-D-xylulose 5-phosphate reductoisomerase (393 aa).

Residues threonine 10, glycine 11, serine 12, isoleucine 13, arginine 37, glutamine 38, and asparagine 124 each contribute to the NADPH site. Lysine 125 is a 1-deoxy-D-xylulose 5-phosphate binding site. Glutamate 126 is an NADPH binding site. Aspartate 150 lines the Mn(2+) pocket. Positions 151, 152, 179, and 202 each coordinate 1-deoxy-D-xylulose 5-phosphate. Glutamate 152 contacts Mn(2+). An NADPH-binding site is contributed by glycine 208. Serine 215, asparagine 220, lysine 221, and glutamate 224 together coordinate 1-deoxy-D-xylulose 5-phosphate. Glutamate 224 is a binding site for Mn(2+).

The protein belongs to the DXR family. The cofactor is Mg(2+). It depends on Mn(2+) as a cofactor.

The catalysed reaction is 2-C-methyl-D-erythritol 4-phosphate + NADP(+) = 1-deoxy-D-xylulose 5-phosphate + NADPH + H(+). The protein operates within isoprenoid biosynthesis; isopentenyl diphosphate biosynthesis via DXP pathway; isopentenyl diphosphate from 1-deoxy-D-xylulose 5-phosphate: step 1/6. Its function is as follows. Catalyzes the NADPH-dependent rearrangement and reduction of 1-deoxy-D-xylulose-5-phosphate (DXP) to 2-C-methyl-D-erythritol 4-phosphate (MEP). The polypeptide is 1-deoxy-D-xylulose 5-phosphate reductoisomerase (Cupriavidus taiwanensis (strain DSM 17343 / BCRC 17206 / CCUG 44338 / CIP 107171 / LMG 19424 / R1) (Ralstonia taiwanensis (strain LMG 19424))).